A 238-amino-acid polypeptide reads, in one-letter code: Ribosomal RNA small subunit methyltransferase G (238 aa).

S-adenosyl-L-methionine contacts are provided by residues Gly78, 129 to 130 (AE), and Arg148.

Belongs to the methyltransferase superfamily. RNA methyltransferase RsmG family.

Its subcellular location is the cytoplasm. Functionally, specifically methylates the N7 position of a guanine in 16S rRNA. This is Ribosomal RNA small subunit methyltransferase G from Caldicellulosiruptor bescii (strain ATCC BAA-1888 / DSM 6725 / KCTC 15123 / Z-1320) (Anaerocellum thermophilum).